A 162-amino-acid chain; its full sequence is Lipoprotein signal peptidase (162 aa).

The next 2 helical transmembrane spans lie at 56-76 (FLPPTGLLFLTLAISAGVVWY) and 84-104 (SPLFLTAFGLILGGGIGNLID). Catalysis depends on residues D113 and D139. A helical membrane pass occupies residues 132-152 (WPIFNVADSCITIGACMIVLF).

Belongs to the peptidase A8 family.

It localises to the cell inner membrane. The catalysed reaction is Release of signal peptides from bacterial membrane prolipoproteins. Hydrolyzes -Xaa-Yaa-Zaa-|-(S,diacylglyceryl)Cys-, in which Xaa is hydrophobic (preferably Leu), and Yaa (Ala or Ser) and Zaa (Gly or Ala) have small, neutral side chains.. It functions in the pathway protein modification; lipoprotein biosynthesis (signal peptide cleavage). In terms of biological role, this protein specifically catalyzes the removal of signal peptides from prolipoproteins. In Chlorobaculum tepidum (strain ATCC 49652 / DSM 12025 / NBRC 103806 / TLS) (Chlorobium tepidum), this protein is Lipoprotein signal peptidase.